The following is a 235-amino-acid chain: Eukaryotic translation initiation factor 4E-1 (235 aa).

A disordered region spans residues 1–52; the sequence is MVVEDSMKATSAEDLSNSIANQNPRGRGGDEDEELEEGEIVGDDDLDSSNLS. The span at 13-24 shows a compositional bias: polar residues; it reads EDLSNSIANQNP. Acidic residues predominate over residues 30 to 47; sequence DEDEELEEGEIVGDDDLD. EIF4G-binding regions lie at residues 60–63 and 70–106; these read HPLE and FDNP…NNIH. Residues 78-83, K110, and 128-129 contribute to the mRNA site; these read KQATWG and WE. C133 and C171 are joined by a disulfide. Residues 154 to 163 form an EIF4G-binding region; the sequence is YTLLAMIGEQ. MRNA contacts are provided by residues 178 to 183 and 223 to 227; these read RSGQDK and KKFDR.

It belongs to the eukaryotic initiation factor 4E family. EIF4F is a multi-subunit complex, the composition of which varies with external and internal environmental conditions. It is composed of at least EIF4A, EIF4E and EIF4G. EIF4E is also known to interact with other partners. Interacts directly with eIF4G. In higher plants two isoforms of EIF4F have been identified, named isoform EIF4F and isoform EIF(iso)4F. Isoform EIF4F has subunits p220 and p26, whereas isoform EIF(iso)4F has subunits p82 and p28. In terms of assembly, (Microbial infection) Interacts with potyvirus viral genome-linked protein (VPg); this interaction is possible in susceptible hosts but impaired in resistant plants. In terms of processing, according to the redox status, the Cys-133-Cys-171 disulfide bridge may have a role in regulating protein function by affecting its ability to bind capped mRNA.

It localises to the nucleus. The protein localises to the cytoplasm. Functionally, component of the protein complex eIF4F, which is involved in the recognition of the mRNA cap, ATP-dependent unwinding of 5'-terminal secondary structure and recruitment of mRNA to the ribosome. Recognizes and binds the 7-methylguanosine-containing mRNA cap during an early step in the initiation of protein synthesis and facilitates ribosome binding by inducing the unwinding of the mRNAs secondary structures. Key component of recessive resistance to potyviruses and Tombusviridae genus Carmovirus such as melon necrotic spot virus (MNSV). (Microbial infection) Susceptibility host factor required for viral infection by recruiting viral RNAs, including uncapped and non-polyadenylated RNA, to the host ribosomal complex via an interaction with viral genome-linked protein (VPg). The chain is Eukaryotic translation initiation factor 4E-1 from Cucumis melo (Muskmelon).